The chain runs to 138 residues: Small ribosomal subunit protein uS11c (138 aa).

The tract at residues 1-22 (MAKPILRIGSRKNTRSGSRKNV) is disordered. A compositionally biased stretch (basic residues) spans 9–22 (GSRKNTRSGSRKNV).

The protein belongs to the universal ribosomal protein uS11 family. Part of the 30S ribosomal subunit.

It localises to the plastid. It is found in the chloroplast. This Arabis hirsuta (Hairy rock-cress) protein is Small ribosomal subunit protein uS11c.